A 448-amino-acid chain; its full sequence is tRNA modification GTPase MnmE (448 aa).

The (6S)-5-formyl-5,6,7,8-tetrahydrofolate site is built by Arg24, Glu81, and Lys120. Positions 216–373 constitute a TrmE-type G domain; that stretch reads GLNVVLVGAP…LKRTLLREAG (158 aa). K(+) is bound at residue Asn226. Residues 226–231, 245–251, and 270–273 contribute to the GTP site; these read NVGKSS, TDIAGTT, and DTAG. Ser230 contacts Mg(2+). Residues Thr245, Ile247, and Thr250 each coordinate K(+). Thr251 lines the Mg(2+) pocket. Residue Lys448 participates in (6S)-5-formyl-5,6,7,8-tetrahydrofolate binding.

Belongs to the TRAFAC class TrmE-Era-EngA-EngB-Septin-like GTPase superfamily. TrmE GTPase family. Homodimer. Heterotetramer of two MnmE and two MnmG subunits. K(+) is required as a cofactor.

The protein localises to the cytoplasm. Exhibits a very high intrinsic GTPase hydrolysis rate. Involved in the addition of a carboxymethylaminomethyl (cmnm) group at the wobble position (U34) of certain tRNAs, forming tRNA-cmnm(5)s(2)U34. This is tRNA modification GTPase MnmE from Neisseria meningitidis serogroup C (strain 053442).